Reading from the N-terminus, the 92-residue chain is Small ribosomal subunit protein uS19 (92 aa).

This sequence belongs to the universal ribosomal protein uS19 family.

In terms of biological role, protein S19 forms a complex with S13 that binds strongly to the 16S ribosomal RNA. In Clostridium botulinum (strain Eklund 17B / Type B), this protein is Small ribosomal subunit protein uS19.